Reading from the N-terminus, the 143-residue chain is Histone H2AX (143 aa).

The interval 1 to 22 is disordered; the sequence is MSGRGKTGGKARAKAKSRSSRA. Position 2 is an N-acetylserine (serine 2). Position 2 is a phosphoserine (serine 2). 2 positions are modified to N6-acetyllysine: lysine 6 and lysine 10. A compositionally biased stretch (basic residues) spans 7–19; the sequence is TGGKARAKAKSRS. Lysine 10 bears the N6-lactoyllysine; alternate mark. Residues lysine 14 and lysine 16 each participate in a glycyl lysine isopeptide (Lys-Gly) (interchain with G-Cter in ubiquitin) cross-link. An N6-acetyllysine; by CREBBP and EP300 modification is found at lysine 37. Residue lysine 120 forms a Glycyl lysine isopeptide (Lys-Gly) (interchain with G-Cter in ubiquitin) linkage. Phosphoserine is present on residues serine 121 and serine 122. The interval 121–143 is disordered; it reads SSATVGPKAPAVGKKASQASQEY. Residues lysine 128 and lysine 135 each participate in a glycyl lysine isopeptide (Lys-Gly) (interchain with G-Cter in SUMO2) cross-link. Residue serine 137 is modified to Phosphoserine. Serine 140 is modified (phosphoserine; by ATM, ATR and PRKDC). Positions 140–141 match the [ST]-Q motif motif; that stretch reads SQ. Tyrosine 143 is modified (phosphotyrosine; by WSTF).

This sequence belongs to the histone H2A family. The nucleosome is a histone octamer containing two molecules each of H2A, H2B, H3 and H4 assembled in one H3-H4 heterotetramer and two H2A-H2B heterodimers. The octamer wraps approximately 147 bp of DNA. Interacts with numerous proteins required for DNA damage signaling and repair when phosphorylated on Ser-140. These include MDC1, BRCA1 and the MRN complex, composed of MRE11, RAD50, and NBN. Interaction with the MRN complex is mediated at least in part by NBN. Also interacts with DHX9/NDHII when phosphorylated on Ser-140 and MCPH1 when phosphorylated at Ser-140 or Tyr-143. Interacts with ARRB2; the interaction is detected in the nucleus upon OR1D2 stimulation. Interacts with WRAP53/TCAB1. Interacts with TP53BP1. Interacts with HDGFL2. Phosphorylated on Ser-140 (to form gamma-H2AX or H2AX139ph) in response to DNA double strand breaks (DSBs) generated by exogenous genotoxic agents, by stalled replication forks, by meiotic recombination events and during immunoglobulin class switching in lymphocytes. Phosphorylation can extend up to several thousand nucleosomes from the actual site of the DSB and may mark the surrounding chromatin for recruitment of proteins required for DNA damage signaling and repair. Widespread phosphorylation may also serve to amplify the damage signal or aid repair of persistent lesions. Phosphorylation of Ser-140 (H2AX139ph) in response to ionizing radiation is mediated by both ATM and PRKDC while defects in DNA replication induce Ser-140 phosphorylation (H2AX139ph) subsequent to activation of ATR and PRKDC. Dephosphorylation of Ser-140 by PP2A is required for DNA DSB repair. In meiosis, Ser-140 phosphorylation (H2AX139ph) first occurs at synaptonemal complexes during leptotene and is an ATM-dependent response to the formation of programmed DSBs by SPO11. Ser-140 phosphorylation (H2AX139ph) subsequently occurs at unsynapsed regions of both autosomes and the XY bivalent during zygotene and is ATR- and BRCA1-dependent. Ser-140 phosphorylation (H2AX139ph) may also be required for transcriptional repression of unsynapsed chromatin and meiotic sex chromosome inactivation (MSCI), whereby the X and Y chromosomes condense in pachytene to form the heterochromatic XY-body. During immunoglobulin class switch recombination in lymphocytes, Ser-140 phosphorylation (H2AX139ph) at sites of DNA-recombination requires the activation-induced cytidine deaminase AICDA. Phosphorylation at Tyr-143 (H2AXY142ph) by BAZ1B/WSTF determines the relative recruitment of either DNA repair or pro-apoptotic factors. Phosphorylation at Tyr-143 (H2AXY142ph) favors the recruitment of APBB1/FE65 and pro-apoptosis factors such as MAPK8/JNK1, triggering apoptosis. In contrast, dephosphorylation of Tyr-143 by EYA proteins (EYA1, EYA2, EYA3 or EYA4) favors the recruitment of MDC1-containing DNA repair complexes to the tail of phosphorylated Ser-140 (H2AX139ph). Phosphorylated by VRK1. Post-translationally, monoubiquitination of Lys-120 (H2AXK119ub) by RING1 and RNF2/RING2 complex gives a specific tag for epigenetic transcriptional repression. Following DNA double-strand breaks (DSBs), it is ubiquitinated through 'Lys-63' linkage of ubiquitin moieties by the E2 ligase UBE2N and the E3 ligases RNF8 and RNF168, leading to the recruitment of repair proteins to sites of DNA damage. Ubiquitination at Lys-14 and Lys-16 (H2AK13Ub and H2AK15Ub, respectively) in response to DNA damage is initiated by RNF168 that mediates monoubiquitination at these 2 sites, and 'Lys-63'-linked ubiquitin are then conjugated to monoubiquitin; RNF8 is able to extend 'Lys-63'-linked ubiquitin chains in vitro. H2AK119Ub and ionizing radiation-induced 'Lys-63'-linked ubiquitination (H2AK13Ub and H2AK15Ub) are distinct events. In terms of processing, acetylation at Lys-6 (H2AXK5ac) by KAT5 component of the NuA4 histone acetyltransferase complex promotes NBN/NBS1 assembly at the sites of DNA damage. Acetylation at Lys-37 increases in S and G2 phases. This modification has been proposed to be important for DNA double-strand break repair. Most abundant in testis, thymus and spleen.

It localises to the nucleus. The protein localises to the chromosome. Functionally, variant histone H2A which replaces conventional H2A in a subset of nucleosomes. Nucleosomes wrap and compact DNA into chromatin, limiting DNA accessibility to the cellular machineries which require DNA as a template. Histones thereby play a central role in transcription regulation, DNA repair, DNA replication and chromosomal stability. DNA accessibility is regulated via a complex set of post-translational modifications of histones, also called histone code, and nucleosome remodeling. Required for checkpoint-mediated arrest of cell cycle progression in response to low doses of ionizing radiation and for efficient repair of DNA double strand breaks (DSBs) specifically when modified by C-terminal phosphorylation. This is Histone H2AX from Mus musculus (Mouse).